The following is a 193-amino-acid chain: Phosphatidylglycerophosphatase and protein-tyrosine phosphatase 1 (193 aa).

The transit peptide at 1-31 (MAASAWLEAGLARVLFYPTLLYTVFRGRVRG) directs the protein to the mitochondrion. The 152-residue stretch at 37–188 (WYHRIDHTVL…LKEFHKEITA (152 aa)) folds into the Tyrosine-protein phosphatase domain. Position 85 is an N6-succinyllysine (lysine 85). Catalysis depends on cysteine 132, which acts as the Phosphocysteine intermediate.

This sequence belongs to the protein-tyrosine phosphatase family. Non-receptor class dual specificity subfamily. In terms of assembly, interacts with STYXL1; the interaction inhibits PTPMT1 catalytic activity. As to expression, predominantly expressed in testis. Expressed at lower level in heart, brain, spleen, lung, liver, skeletal muscle, kidney, bone marrow, eye, lymph node, smooth muscle, prostate, thymus, stomach and uterus.

It localises to the mitochondrion inner membrane. The enzyme catalyses a 1,2-diacyl-sn-glycero-3-phospho-(1'-sn-glycero-3'-phosphate) + H2O = a 1,2-diacyl-sn-glycero-3-phospho-(1'-sn-glycerol) + phosphate. It carries out the reaction O-phospho-L-tyrosyl-[protein] + H2O = L-tyrosyl-[protein] + phosphate. The catalysed reaction is O-phospho-L-seryl-[protein] + H2O = L-seryl-[protein] + phosphate. It catalyses the reaction O-phospho-L-threonyl-[protein] + H2O = L-threonyl-[protein] + phosphate. The enzyme catalyses 1,2-di-(9Z-octadecenoyl)-sn-glycero-3-phospho-(1'-sn-glycerol-3'-phosphate) + H2O = 1,2-di-(9Z-octadecenoyl)-sn-glycero-3-phospho-(1'-sn-glycerol) + phosphate. It carries out the reaction 1,2-dioctanoyl-sn-glycero-3-phospho-(1D-myo-inositol-5-phosphate) + H2O = 1,2-dioctanoyl-sn-glycero-3-phospho-(1D-myo-inositol) + phosphate. The catalysed reaction is a 1-acyl-2-hexanoyl-sn-glycero-3-phospho-(1D-myo-inositol-5-phosphate) + H2O = a 1-acyl-2-hexanoyl-sn-glycero-3-phospho-(1D-myo-inositol) + phosphate. It catalyses the reaction 1,2-dibutyryl-sn-glycero-3-phospho-(1D-myo-inositol-5-phosphate) + H2O = 1,2-dibutyryl-sn-glycero-3-phospho-(1D-myo-inositol) + phosphate. Its pathway is phospholipid metabolism; phosphatidylglycerol biosynthesis; phosphatidylglycerol from CDP-diacylglycerol: step 2/2. Functionally, lipid phosphatase which dephosphorylates phosphatidylglycerophosphate (PGP) to phosphatidylglycerol (PG). PGP is an essential intermediate in the biosynthetic pathway of cardiolipin, a mitochondrial-specific phospholipid regulating the membrane integrity and activities of the organelle. Has also been shown to display phosphatase activity toward phosphoprotein substrates, specifically mediates dephosphorylation of mitochondrial proteins, thereby playing an essential role in ATP production. Has probably a preference for proteins phosphorylated on Ser and/or Thr residues compared to proteins phosphorylated on Tyr residues. Probably involved in regulation of insulin secretion in pancreatic beta cells. May prevent intrinsic apoptosis, probably by regulating mitochondrial membrane integrity. In Mus musculus (Mouse), this protein is Phosphatidylglycerophosphatase and protein-tyrosine phosphatase 1.